Here is a 322-residue protein sequence, read N- to C-terminus: uncharacterized protein (322 aa).

The next 9 helical transmembrane spans lie at 5-25 (LISI…IPGI), 37-57 (IGPS…FKET), 71-91 (LPLL…LTSF), 109-129 (MMYV…MPFI), 153-173 (SFKM…LPFV), 189-209 (LFSL…VIMI), 245-265 (LLLI…APDI), 268-288 (PITI…ATFV), and 300-320 (IYPI…FALL).

Its subcellular location is the cell membrane. This is an uncharacterized protein from Methanocaldococcus jannaschii (strain ATCC 43067 / DSM 2661 / JAL-1 / JCM 10045 / NBRC 100440) (Methanococcus jannaschii).